The primary structure comprises 433 residues: 3-phosphoshikimate 1-carboxyvinyltransferase (433 aa).

3-phosphoshikimate is bound by residues Lys-21, Ser-22, and Arg-26. Lys-21 contributes to the phosphoenolpyruvate binding site. Phosphoenolpyruvate contacts are provided by Gly-92 and Arg-120. 4 residues coordinate 3-phosphoshikimate: Ser-166, Gln-168, Asp-317, and Lys-344. Residue Gln-168 participates in phosphoenolpyruvate binding. Asp-317 (proton acceptor) is an active-site residue. 2 residues coordinate phosphoenolpyruvate: Arg-348 and Arg-391.

The protein belongs to the EPSP synthase family. Monomer.

The protein resides in the cytoplasm. The catalysed reaction is 3-phosphoshikimate + phosphoenolpyruvate = 5-O-(1-carboxyvinyl)-3-phosphoshikimate + phosphate. The protein operates within metabolic intermediate biosynthesis; chorismate biosynthesis; chorismate from D-erythrose 4-phosphate and phosphoenolpyruvate: step 6/7. In terms of biological role, catalyzes the transfer of the enolpyruvyl moiety of phosphoenolpyruvate (PEP) to the 5-hydroxyl of shikimate-3-phosphate (S3P) to produce enolpyruvyl shikimate-3-phosphate and inorganic phosphate. In Caldicellulosiruptor bescii (strain ATCC BAA-1888 / DSM 6725 / KCTC 15123 / Z-1320) (Anaerocellum thermophilum), this protein is 3-phosphoshikimate 1-carboxyvinyltransferase.